The sequence spans 476 residues: Aspartyl/glutamyl-tRNA(Asn/Gln) amidotransferase subunit B (476 aa).

Belongs to the GatB/GatE family. GatB subfamily. As to quaternary structure, heterotrimer of A, B and C subunits.

The catalysed reaction is L-glutamyl-tRNA(Gln) + L-glutamine + ATP + H2O = L-glutaminyl-tRNA(Gln) + L-glutamate + ADP + phosphate + H(+). The enzyme catalyses L-aspartyl-tRNA(Asn) + L-glutamine + ATP + H2O = L-asparaginyl-tRNA(Asn) + L-glutamate + ADP + phosphate + 2 H(+). Allows the formation of correctly charged Asn-tRNA(Asn) or Gln-tRNA(Gln) through the transamidation of misacylated Asp-tRNA(Asn) or Glu-tRNA(Gln) in organisms which lack either or both of asparaginyl-tRNA or glutaminyl-tRNA synthetases. The reaction takes place in the presence of glutamine and ATP through an activated phospho-Asp-tRNA(Asn) or phospho-Glu-tRNA(Gln). The polypeptide is Aspartyl/glutamyl-tRNA(Asn/Gln) amidotransferase subunit B (Moorella thermoacetica (strain ATCC 39073 / JCM 9320)).